Consider the following 473-residue polypeptide: Inactive levansucrase (473 aa).

A signal peptide spans Met-1 to Ala-29.

This sequence belongs to the glycosyl hydrolase 68 family.

The protein resides in the secreted. The protein is Inactive levansucrase (sacB) of Geobacillus stearothermophilus (Bacillus stearothermophilus).